Consider the following 325-residue polypeptide: Tryptophan--tRNA ligase (325 aa).

Residues 9–11 (QPS) and 17–18 (GN) contribute to the ATP site. The short motif at 10 to 18 (PSGILHIGN) is the 'HIGH' region element. Residue Asp132 coordinates L-tryptophan. ATP contacts are provided by residues 144-146 (GKD), Val184, and 191-195 (KMSKS). Residues 191–195 (KMSKS) carry the 'KMSKS' region motif.

The protein belongs to the class-I aminoacyl-tRNA synthetase family. In terms of assembly, homodimer.

The protein localises to the cytoplasm. The catalysed reaction is tRNA(Trp) + L-tryptophan + ATP = L-tryptophyl-tRNA(Trp) + AMP + diphosphate + H(+). Catalyzes the attachment of tryptophan to tRNA(Trp). This Fusobacterium nucleatum subsp. nucleatum (strain ATCC 25586 / DSM 15643 / BCRC 10681 / CIP 101130 / JCM 8532 / KCTC 2640 / LMG 13131 / VPI 4355) protein is Tryptophan--tRNA ligase.